A 218-amino-acid polypeptide reads, in one-letter code: Thiamine-phosphate synthase (218 aa).

Residues 43 to 47 and N78 each bind 4-amino-2-methyl-5-(diphosphooxymethyl)pyrimidine; that span reads QFRDK. Residues D79 and D98 each coordinate Mg(2+). 4-amino-2-methyl-5-(diphosphooxymethyl)pyrimidine is bound at residue S117. 143–145 provides a ligand contact to 2-[(2R,5Z)-2-carboxy-4-methylthiazol-5(2H)-ylidene]ethyl phosphate; that stretch reads TNS. Position 146 (K146) interacts with 4-amino-2-methyl-5-(diphosphooxymethyl)pyrimidine. Residues G174 and 194–195 each bind 2-[(2R,5Z)-2-carboxy-4-methylthiazol-5(2H)-ylidene]ethyl phosphate; that span reads IS.

This sequence belongs to the thiamine-phosphate synthase family. Mg(2+) is required as a cofactor.

It catalyses the reaction 2-[(2R,5Z)-2-carboxy-4-methylthiazol-5(2H)-ylidene]ethyl phosphate + 4-amino-2-methyl-5-(diphosphooxymethyl)pyrimidine + 2 H(+) = thiamine phosphate + CO2 + diphosphate. The catalysed reaction is 2-(2-carboxy-4-methylthiazol-5-yl)ethyl phosphate + 4-amino-2-methyl-5-(diphosphooxymethyl)pyrimidine + 2 H(+) = thiamine phosphate + CO2 + diphosphate. The enzyme catalyses 4-methyl-5-(2-phosphooxyethyl)-thiazole + 4-amino-2-methyl-5-(diphosphooxymethyl)pyrimidine + H(+) = thiamine phosphate + diphosphate. Its pathway is cofactor biosynthesis; thiamine diphosphate biosynthesis; thiamine phosphate from 4-amino-2-methyl-5-diphosphomethylpyrimidine and 4-methyl-5-(2-phosphoethyl)-thiazole: step 1/1. Condenses 4-methyl-5-(beta-hydroxyethyl)thiazole monophosphate (THZ-P) and 2-methyl-4-amino-5-hydroxymethyl pyrimidine pyrophosphate (HMP-PP) to form thiamine monophosphate (TMP). In Lactococcus lactis subsp. cremoris (strain MG1363), this protein is Thiamine-phosphate synthase.